A 539-amino-acid chain; its full sequence is Acrosin-binding protein (539 aa).

Residues 1–25 (MRQLAAGSLLSLLKVLLLPLAPAPA) form the signal peptide. The interval 26–106 (QDANSASTPG…ASWFESFCQF (81 aa)) is pro-ACR binding. A propeptide spans 26 to 269 (QDANSASTPG…NPFSFTPRVR (244 aa)) (removed in active form). Residues 186-259 (LGGQEQGQEH…PKFQSEFVSS (74 aa)) are disordered. Over residues 192–211 (GQEHKQEHKQEQGQEHKQDE) the composition is skewed to basic and acidic residues. A compositionally biased stretch (acidic residues) spans 212–238 (GQEQEEQEEEQEEEGKQEEGQGTEESL). The tract at residues 315-423 (LPHVDALLVL…TQIGTLKSGR (109 aa)) is pro-ACR binding.

As to quaternary structure, binds specifically to the 55- and 53-kDa proacrosins and the 49-kDa acrosin intermediate, but is not capable of binding 43-kDa acrosin intermediate and 32-kDa mature acrosin. The N-terminus is blocked. Post-translationally, synthesized as a 60-kDa precursor, the 35-kDa mature form is post-translationally produced by the removal of the N-terminal half of the precursor during sperm maturation in the testis and/or epididymis. In terms of processing, phosphorylated on Tyr residues in capacitated sperm. As to expression, specifically expressed in testis.

The protein localises to the secreted. It localises to the cytoplasmic vesicle. Its subcellular location is the secretory vesicle. It is found in the acrosome. In terms of biological role, acrosomal protein that maintains proacrosin (pro-ACR) as an enzymatically inactive zymogen in the acrosome. Involved also in the acrosome formation. This chain is Acrosin-binding protein, found in Sus scrofa (Pig).